A 244-amino-acid chain; its full sequence is uncharacterized protein (244 aa).

Positions 12-80 (VALWRQIADR…QGRGTMIERK (69 aa)) constitute an HTH gntR-type domain. The H-T-H motif DNA-binding region spans 40 to 59 (ETALAAEFGVNRHTVRSALA).

This is an uncharacterized protein from Rhizobium meliloti (strain 1021) (Ensifer meliloti).